A 318-amino-acid polypeptide reads, in one-letter code: UAP56-interacting factor (318 aa).

Residue Met-1 is modified to N-acetylmethionine. The segment at 1 to 27 is disordered; the sequence is MNRFSTRLMGATATPPPAPPKARSNEN. Thr-14 is subject to Phosphothreonine. Ser-24 bears the Phosphoserine mark. A UAP56-binding motif motif is present at residues 27–45; sequence NLDKIDMSLDDIIKLNRKE. 2 positions are modified to phosphoserine: Ser-61 and Ser-118. Lys-140 is covalently cross-linked (Glycyl lysine isopeptide (Lys-Gly) (interchain with G-Cter in SUMO1)). Residues 163 to 180 show a composition bias toward polar residues; sequence LNRKNNIPNNFTRSGNKL. A disordered region spans residues 163 to 183; the sequence is LNRKNNIPNNFTRSGNKLSHQ. Residue Lys-261 forms a Glycyl lysine isopeptide (Lys-Gly) (interchain with G-Cter in SUMO2) linkage.

The protein belongs to the UIF family. As to quaternary structure, interacts with DDX39B/UAP56 and NXF1; interaction with DDX39B/UAP56 and NXF1 are mutually exclusive. Interacts with SSRP1; required for its recruitment to mRNAs. Interacts with CHTOP.

It is found in the nucleus. The protein resides in the nucleoplasm. The protein localises to the nucleus speckle. Required for mRNA export from the nucleus to the cytoplasm. Acts as an adapter that uses the DDX39B/UAP56-NFX1 pathway to ensure efficient mRNA export and delivering to the nuclear pore. Associates with spliced and unspliced mRNAs simultaneously with ALYREF/THOC4. The chain is UAP56-interacting factor (FYTTD1) from Bos taurus (Bovine).